The primary structure comprises 397 residues: S-adenosylmethionine synthase (397 aa).

ATP is bound at residue His16. A Mg(2+)-binding site is contributed by Asp18. Glu44 contacts K(+). Glu57 and Gln100 together coordinate L-methionine. The interval 100–110 is flexible loop; the sequence is QSPDIAQGVDN. Residues 175 to 177, 242 to 243, Asp251, 257 to 258, Ala274, and Lys278 each bind ATP; these read DGK, RF, and RK. An L-methionine-binding site is contributed by Asp251. Lys282 is an L-methionine binding site.

Belongs to the AdoMet synthase family. In terms of assembly, homotetramer; dimer of dimers. The cofactor is Mg(2+). Requires K(+) as cofactor.

The protein localises to the cytoplasm. It catalyses the reaction L-methionine + ATP + H2O = S-adenosyl-L-methionine + phosphate + diphosphate. It functions in the pathway amino-acid biosynthesis; S-adenosyl-L-methionine biosynthesis; S-adenosyl-L-methionine from L-methionine: step 1/1. In terms of biological role, catalyzes the formation of S-adenosylmethionine (AdoMet) from methionine and ATP. The overall synthetic reaction is composed of two sequential steps, AdoMet formation and the subsequent tripolyphosphate hydrolysis which occurs prior to release of AdoMet from the enzyme. This Leifsonia xyli subsp. xyli (strain CTCB07) protein is S-adenosylmethionine synthase.